Consider the following 407-residue polypeptide: GTPase Obg (407 aa).

An Obg domain is found at 1–159; the sequence is MKFVDEVSIR…RDLKLEMKVL (159 aa). Residues 128–148 are disordered; the sequence is TRFKSSTNRAPRQTTPGKPGE. Polar residues predominate over residues 129–143; sequence RFKSSTNRAPRQTTP. Residues 160–333 form the OBG-type G domain; it reads ADVGLLGLPN…LTRDIMRYLE (174 aa). Residues 166–173, 191–195, 213–216, 283–286, and 314–316 each bind GTP; these read GLPNAGKS, FTTLV, DIPG, NKCD, and SAI. 2 residues coordinate Mg(2+): serine 173 and threonine 193. Positions 376 to 407 are disordered; sequence SGVKSVHDIGDDDWDEEDVDDEDGPEIIYVRD. A compositionally biased stretch (acidic residues) spans 385-400; sequence GDDDWDEEDVDDEDGP.

Belongs to the TRAFAC class OBG-HflX-like GTPase superfamily. OBG GTPase family. Monomer. Mg(2+) serves as cofactor.

The protein localises to the cytoplasm. In terms of biological role, an essential GTPase which binds GTP, GDP and possibly (p)ppGpp with moderate affinity, with high nucleotide exchange rates and a fairly low GTP hydrolysis rate. Plays a role in control of the cell cycle, stress response, ribosome biogenesis and in those bacteria that undergo differentiation, in morphogenesis control. This is GTPase Obg from Pseudomonas fluorescens (strain Pf0-1).